A 168-amino-acid chain; its full sequence is HTH-type transcriptional regulator IscR (168 aa).

The HTH rrf2-type domain occupies 2-131 (KLTSKGRYAV…DGISLGELMV (130 aa)). The segment at residues 28 to 51 (LADISERQGISLSYLEQLFSKLRK) is a DNA-binding region (H-T-H motif). Residues cysteine 92, cysteine 98, and cysteine 104 each coordinate [2Fe-2S] cluster.

[2Fe-2S] cluster is required as a cofactor.

Functionally, regulates the transcription of several operons and genes involved in the biogenesis of Fe-S clusters and Fe-S-containing proteins. The protein is HTH-type transcriptional regulator IscR of Aliivibrio salmonicida (strain LFI1238) (Vibrio salmonicida (strain LFI1238)).